The chain runs to 71 residues: Translation initiation factor IF-1 (71 aa).

Positions 1–71 (MAKQSAIEQD…LSKARITYRY (71 aa)) constitute an S1-like domain.

The protein belongs to the IF-1 family. As to quaternary structure, component of the 30S ribosomal translation pre-initiation complex which assembles on the 30S ribosome in the order IF-2 and IF-3, IF-1 and N-formylmethionyl-tRNA(fMet); mRNA recruitment can occur at any time during PIC assembly.

It localises to the cytoplasm. Its function is as follows. One of the essential components for the initiation of protein synthesis. Stabilizes the binding of IF-2 and IF-3 on the 30S subunit to which N-formylmethionyl-tRNA(fMet) subsequently binds. Helps modulate mRNA selection, yielding the 30S pre-initiation complex (PIC). Upon addition of the 50S ribosomal subunit IF-1, IF-2 and IF-3 are released leaving the mature 70S translation initiation complex. The protein is Translation initiation factor IF-1 of Flavobacterium psychrophilum (strain ATCC 49511 / DSM 21280 / CIP 103535 / JIP02/86).